A 434-amino-acid chain; its full sequence is GTPase Obg (434 aa).

One can recognise an Obg domain in the interval 1-159; sequence MQFIDRCQIK…KTVRLELKYL (159 aa). An OBG-type G domain is found at 160–329; that stretch reads ANVGIVGYPN…LVDRVFDLYQ (170 aa). Residues 166-173, 191-195, 212-215, 282-285, and 310-312 contribute to the GTP site; these read GYPNAGKS, FTTLV, DIPG, NKMD, and ISA. Positions 173 and 193 each coordinate Mg(2+). The region spanning 356-434 is the OCT domain; sequence EKTIDDDPLD…ICDYEYLIDE (79 aa).

The protein belongs to the TRAFAC class OBG-HflX-like GTPase superfamily. OBG GTPase family. In terms of assembly, monomer. Mg(2+) serves as cofactor.

The protein resides in the cytoplasm. In terms of biological role, an essential GTPase which binds GTP, GDP and possibly (p)ppGpp with moderate affinity, with high nucleotide exchange rates and a fairly low GTP hydrolysis rate. Plays a role in control of the cell cycle, stress response, ribosome biogenesis and in those bacteria that undergo differentiation, in morphogenesis control. The sequence is that of GTPase Obg from Mycoplasmoides gallisepticum (strain R(low / passage 15 / clone 2)) (Mycoplasma gallisepticum).